Consider the following 148-residue polypeptide: Large ribosomal subunit protein uL15 (148 aa).

Basic and acidic residues predominate over residues 1-40 (MADILQMHDLKPAPGANKDRIRVGRGEGSKGKTSGRGDKG). The tract at residues 1-47 (MADILQMHDLKPAPGANKDRIRVGRGEGSKGKTSGRGDKGTKKRYQV) is disordered.

Belongs to the universal ribosomal protein uL15 family. As to quaternary structure, part of the 50S ribosomal subunit.

In terms of biological role, binds to the 23S rRNA. The protein is Large ribosomal subunit protein uL15 of Bifidobacterium adolescentis (strain ATCC 15703 / DSM 20083 / NCTC 11814 / E194a).